The following is a 297-amino-acid chain: Putative heme-binding peroxidase (297 aa).

Histidine 74 acts as the Proton acceptor in catalysis. Histidine 198 serves as a coordination point for heme b. Residue tryptophan 214 is the Tryptophan radical intermediate of the active site.

This sequence belongs to the peroxidase family. Cytochrome c peroxidase subfamily. Requires heme b as cofactor.

Destroys radicals which are normally produced within the cells and which are toxic to biological systems. The sequence is that of Putative heme-binding peroxidase from Yarrowia lipolytica (strain CLIB 122 / E 150) (Yeast).